A 243-amino-acid polypeptide reads, in one-letter code: NEDD4-binding protein 2-like 1 (243 aa).

The interval 1–38 is disordered; that stretch reads MEDSFLQSFGRLSLQPQQQQQRQRPPRPPPRGTPPRRH.

As to quaternary structure, interacts with dynactin subunit proteins, including DCTN4, DCTN5 and DCTN5.

Its function is as follows. Might play a role in adipocyte differentiation and triglyceride accumulation. The protein is NEDD4-binding protein 2-like 1 (N4BP2L1) of Homo sapiens (Human).